A 452-amino-acid chain; its full sequence is Glycoprotein endo-alpha-1,2-mannosidase-like protein (452 aa).

The Cytoplasmic portion of the chain corresponds to 1–8 (MARRRRRA). Residues 9 to 29 (CIALFLVLLFAFGTLMGLRTL) form a helical; Signal-anchor for type II membrane protein membrane-spanning segment. Over 30–452 (KAPDGLPALG…FIKEKEQWLM (423 aa)) the chain is Lumenal. Positions 40–90 (PGPELAPFERRPEGNPAPARAPAAPAAPPPPPPRTAAPRASLGPAEADPAP) are disordered. The segment covering 64-74 (PAAPPPPPPRT) has biased composition (pro residues).

It belongs to the glycosyl hydrolase 99 family.

Its subcellular location is the golgi apparatus membrane. This is Glycoprotein endo-alpha-1,2-mannosidase-like protein (Maneal) from Mus musculus (Mouse).